Reading from the N-terminus, the 723-residue chain is Threonine--tRNA ligase, mitochondrial (723 aa).

The residue at position 57 (S57) is a Phosphoserine. The TGS domain maps to R64–T126.

This sequence belongs to the class-II aminoacyl-tRNA synthetase family. As to quaternary structure, homodimer.

Its subcellular location is the mitochondrion matrix. It carries out the reaction tRNA(Thr) + L-threonine + ATP = L-threonyl-tRNA(Thr) + AMP + diphosphate + H(+). In terms of biological role, catalyzes the attachment of threonine to tRNA(Thr) in a two-step reaction: threonine is first activated by ATP to form Thr-AMP and then transferred to the acceptor end of tRNA(Thr). Also edits incorrectly charged tRNA(Thr) via its editing domain. This is Threonine--tRNA ligase, mitochondrial (Tars2) from Mus musculus (Mouse).